The sequence spans 389 residues: Succinate--CoA ligase [ADP-forming] subunit beta (389 aa).

One can recognise an ATP-grasp domain in the interval 9–236 (RDMFEAHGVP…KDAADPLEAK (228 aa)). Residues Lys45, 52–54 (GRG), Ala94, and Glu99 contribute to the ATP site. 2 residues coordinate Mg(2+): Asn191 and Asp205. Substrate contacts are provided by residues Asn256 and 318-320 (GIT).

It belongs to the succinate/malate CoA ligase beta subunit family. As to quaternary structure, heterotetramer of two alpha and two beta subunits. It depends on Mg(2+) as a cofactor.

The catalysed reaction is succinate + ATP + CoA = succinyl-CoA + ADP + phosphate. The enzyme catalyses GTP + succinate + CoA = succinyl-CoA + GDP + phosphate. The protein operates within carbohydrate metabolism; tricarboxylic acid cycle; succinate from succinyl-CoA (ligase route): step 1/1. Functionally, succinyl-CoA synthetase functions in the citric acid cycle (TCA), coupling the hydrolysis of succinyl-CoA to the synthesis of either ATP or GTP and thus represents the only step of substrate-level phosphorylation in the TCA. The beta subunit provides nucleotide specificity of the enzyme and binds the substrate succinate, while the binding sites for coenzyme A and phosphate are found in the alpha subunit. The sequence is that of Succinate--CoA ligase [ADP-forming] subunit beta from Paenarthrobacter aurescens (strain TC1).